The following is a 341-amino-acid chain: Serine/threonine-protein kinase-like protein At5g23170 (341 aa).

Residues F16–A298 form the Protein kinase domain. Residues I22–V30 and K51 contribute to the ATP site. A disordered region spans residues T52–L75. Residues P53 to S69 show a composition bias toward low complexity. D153 serves as the catalytic Proton acceptor. Positions M311–T332 form a coiled coil.

Belongs to the protein kinase superfamily. Ser/Thr protein kinase family. Ubiquitous. Higher expression in mature stamina and pollen.

The catalysed reaction is L-seryl-[protein] + ATP = O-phospho-L-seryl-[protein] + ADP + H(+). The enzyme catalyses L-threonyl-[protein] + ATP = O-phospho-L-threonyl-[protein] + ADP + H(+). This Arabidopsis thaliana (Mouse-ear cress) protein is Serine/threonine-protein kinase-like protein At5g23170.